The primary structure comprises 259 residues: UPF0758 protein Bphyt_3148 (259 aa).

The 123-residue stretch at 137-259 (LLNSPEAVEN…VYSFARAGWP (123 aa)) folds into the MPN domain. Residues histidine 208, histidine 210, and aspartate 221 each coordinate Zn(2+). The JAMM motif motif lies at 208–221 (HNHPSGAVQPSASD).

Belongs to the UPF0758 family.

The polypeptide is UPF0758 protein Bphyt_3148 (Paraburkholderia phytofirmans (strain DSM 17436 / LMG 22146 / PsJN) (Burkholderia phytofirmans)).